A 460-amino-acid chain; its full sequence is V-type ATP synthase beta chain 2 (460 aa).

This sequence belongs to the ATPase alpha/beta chains family.

Produces ATP from ADP in the presence of a proton gradient across the membrane. The V-type beta chain is a regulatory subunit. This Clostridium tetani (strain Massachusetts / E88) protein is V-type ATP synthase beta chain 2.